Consider the following 364-residue polypeptide: GDSL esterase/lipase EXL3 (364 aa).

The signal sequence occupies residues 1 to 32 (MKDNSSWSCSCSWSSWKICLLSVLFLTETITA). The Nucleophile role is filled by S50. Active-site residues include D339 and H342.

The protein belongs to the 'GDSL' lipolytic enzyme family. As to expression, flower buds.

It is found in the secreted. The chain is GDSL esterase/lipase EXL3 (EXL3) from Arabidopsis thaliana (Mouse-ear cress).